Consider the following 481-residue polypeptide: Phosphatidylinositol 4-kinase type 2-beta (481 aa).

Positions methionine 1 to alanine 11 are enriched in basic and acidic residues. The interval methionine 1 to aspartate 82 is disordered. Residues serine 12, serine 17, and serine 45 each carry the phosphoserine modification. Residues alanine 53–leucine 64 are compositionally biased toward acidic residues. Residues glycine 120–arginine 451 enclose the PI3K/PI4K catalytic domain. A G-loop region spans residues isoleucine 126–glycine 132. Serine 133 and lysine 148 together coordinate ATP. Residues glutamate 153–tyrosine 155 form an important for substrate binding region. The interval lysine 161 to cysteine 174 is important for interaction with membranes. ATP is bound by residues glutamine 257–valine 260 and arginine 271–lysine 272. The interval lysine 264–lysine 272 is important for interaction with membranes. The catalytic loop stretch occupies residues arginine 301–asparagine 309. The activation loop stretch occupies residues alanine 342–phenylalanine 362. Residue aspartate 344 coordinates ATP. The important for interaction with membranes stretch occupies residues tryptophan 357–tryptophan 366.

Belongs to the PI3/PI4-kinase family. Type II PI4K subfamily. Widely expressed.

It localises to the cytoplasm. It is found in the cytosol. The protein localises to the golgi apparatus membrane. The protein resides in the endoplasmic reticulum membrane. Its subcellular location is the cell membrane. It localises to the early endosome membrane. The catalysed reaction is a 1,2-diacyl-sn-glycero-3-phospho-(1D-myo-inositol) + ATP = a 1,2-diacyl-sn-glycero-3-phospho-(1D-myo-inositol 4-phosphate) + ADP + H(+). With respect to regulation, inhibited by phenylarsine oxide and adenosine. Activation through membrane association is stimulated by active RAC1. Functionally, together with PI4K2A and the type III PI4Ks (PIK4CA and PIK4CB) it contributes to the overall PI4-kinase activity of the cell. This contribution may be especially significant in plasma membrane, endosomal and Golgi compartments. The phosphorylation of phosphatidylinositol (PI) to PI4P is the first committed step in the generation of phosphatidylinositol 4,5-bisphosphate (PIP2), a precursor of the second messenger inositol 1,4,5-trisphosphate (InsP3). Contributes to the production of InsP3 in stimulated cells and is likely to be involved in the regulation of vesicular trafficking. This is Phosphatidylinositol 4-kinase type 2-beta (PI4K2B) from Homo sapiens (Human).